A 147-amino-acid polypeptide reads, in one-letter code: Transthyretin (147 aa).

The signal sequence occupies residues 1 to 20; it reads MASHRLLLLCLAGLVFVSEA. Position 30 is a sulfocysteine (cysteine 30). L-thyroxine is bound at residue lysine 35. Position 62 is a 4-carboxyglutamate (glutamate 62). Serine 72 is modified (phosphoserine). Glutamate 74 contributes to the L-thyroxine binding site. N-linked (GlcNAc...) asparagine glycosylation occurs at asparagine 118. Serine 137 contacts L-thyroxine.

It belongs to the transthyretin family. In terms of assembly, homotetramer. Dimer of dimers. In the homotetramer, subunits assemble around a central channel that can accommodate two ligand molecules. Interacts with RBP4. In terms of processing, sulfonation of the reactive cysteine Cys-30 enhances the stability of the native conformation of TTR, avoiding misassembly of the protein leading to amyloid formation. As to expression, detected in liver.

It localises to the secreted. In terms of biological role, thyroid hormone-binding protein. Probably transports thyroxine from the bloodstream to the brain. This chain is Transthyretin (TTR), found in Pongo abelii (Sumatran orangutan).